Here is a 445-residue protein sequence, read N- to C-terminus: Glutamate--tRNA ligase 2 (445 aa).

The 'HIGH' region signature appears at 10 to 20 (PSPTGMLHVGN). The 'KMSKS' region motif lies at 240–244 (KISKR). Residue Lys-243 coordinates ATP.

The protein belongs to the class-I aminoacyl-tRNA synthetase family. Glutamate--tRNA ligase type 1 subfamily. Monomer.

The protein resides in the cytoplasm. The enzyme catalyses tRNA(Glu) + L-glutamate + ATP = L-glutamyl-tRNA(Glu) + AMP + diphosphate. Functionally, catalyzes the attachment of glutamate to tRNA(Glu) in a two-step reaction: glutamate is first activated by ATP to form Glu-AMP and then transferred to the acceptor end of tRNA(Glu). This Rickettsia canadensis (strain McKiel) protein is Glutamate--tRNA ligase 2.